A 273-amino-acid chain; its full sequence is MTTPTLIVTPPSPPAPSYSANRVPQPSLMDKIKKIAAIASLILIGTIGFLALLGHLVGFLIAPQITIVLLALFITSLAGNALYLQKTANLHLYQDLQREVGSLKEINFMLSVLQKEFLHLSKEFATTSKDLSAVSQDFYSCLQGFRDNYKGFESLLDEYKNSTEEMRKLFSQEIIADLKGSVASLREEIRFLTPLAEEVRRLAHNQESLTAAIEELKTIRDSLRDEIGQLSQLSKTLTSQIALQRKESSDLCSQIRETLSSPRKSASPSTKSS.

The interval 1–20 (MTTPTLIVTPPSPPAPSYSA) is disordered. Helical transmembrane passes span 41-61 (LILI…GFLI) and 64-84 (QITI…ALYL). Positions 206–233 (QESLTAAIEELKTIRDSLRDEIGQLSQL) form a coiled coil. Positions 253–273 (SQIRETLSSPRKSASPSTKSS) are disordered.

The protein belongs to the IncA family. May form homodimers via its C-terminus. Forms homodimers, and probably higher-order oligomers.

The protein localises to the secreted. It localises to the host vacuole. It is found in the host pathogen-containing vacuole. The protein resides in the host pathogen-containing vacuole membrane. In terms of biological role, chlamydia replicate within a host intracellular vacuole, termed an inclusion, which is formed by fusion of many smaller inclusion bodies. IncA may be involved in the homotypic fusion of inclusions; injection of anti-IncA antibodies prevents homotypic fusion, but not fusion with exocytic vesicles. The sequence is that of Inclusion membrane protein A (incA) from Chlamydia trachomatis serovar L2 (strain ATCC VR-902B / DSM 19102 / 434/Bu).